Here is a 759-residue protein sequence, read N- to C-terminus: Zinc finger protein 287 (759 aa).

An SCAN box domain is found at 42–124 (RRNFRNFPYP…ALVEDLTQIL (83 aa)). The tract at residues 127 to 154 (EEAPQSSALPQDTPEDDPNHDPNPASQA) is disordered. The 69-residue stretch at 166 to 234 (VTFNDVAVDI…IKEIVEGPNP (69 aa)) folds into the KRAB domain. 14 C2H2-type zinc fingers span residues 366–388 (YSCNVCGKQFRKYPSLLAHRENH), 394–416 (YECEECGKEFKHLSSLIAHQRMH), 422–444 (YECHQCGKAFSQRAHLTIHQRIH), 450–472 (YKCEDCGKDFSQRAHLTIHQRTH), 478–500 (YKCLECSKTFSHSSSLINHQRVH), 506–528 (YICNECGKTFSQSTHLLQHQKIH), 534–556 (YKCNECWKVFSQSTYLIRHQRIH), 562–584 (YKCTACGKAFAHSSTLIQHQTTH), 590–612 (YICNVCGKAFSQSANLTQHHRTH), 618–640 (YKCSVCGKAFSQSVHLTQHQRIH), 646–668 (FKCNTCGKAYRQGANLTQHQRVH), 674–696 (YKCHHCGKAFIYSSSLNQHRRTH), 702–724 (YKCSHCNKDFSQRTCLIQHQRIH), and 730–752 (YGCRICGKAFTQSTNLIQHQRVH).

It belongs to the krueppel C2H2-type zinc-finger protein family. Expressed in brain and at low levels in kidney and spleen and few hematopoietic cell lines.

It localises to the nucleus. Its function is as follows. May be involved in transcriptional regulation. This chain is Zinc finger protein 287, found in Mus musculus (Mouse).